The primary structure comprises 163 residues: Single-stranded DNA-binding protein 1 (163 aa).

Residues Met-1–Glu-104 enclose the SSB domain. The disordered stretch occupies residues Arg-106–Phe-163. A compositionally biased stretch (low complexity) spans Gly-111–Ser-135. The Important for interaction with partner proteins motif lies at Asp-158–Phe-163.

As to quaternary structure, homotetramer.

Its function is as follows. Plays an important role in DNA replication, recombination and repair. Binds to ssDNA and to an array of partner proteins to recruit them to their sites of action during DNA metabolism. This Streptococcus agalactiae serotype III (strain NEM316) protein is Single-stranded DNA-binding protein 1 (ssb1).